Reading from the N-terminus, the 1166-residue chain is IQ domain-containing protein N (1166 aa).

Residues 1-19 (MQPATQLQFTNHLSPNGQC) show a composition bias toward polar residues. The interval 1–56 (MQPATQLQFTNHLSPNGQCILQPPPTPSLPDKMEKAPPQPQHEGLKSEEHLPQQPA) is disordered. Residues 89 to 118 (HARAATLIQANWRGYRLRQKLISQMTAAKA) form the IQ 1 domain. 3 disordered regions span residues 431-450 (VCPG…VATP), 769-797 (LSAP…TTQG), and 829-848 (DSGA…PCQE). IQ domains are found at residues 907–932 (AVTT…RRAT), 928–955 (HRRA…RATT), 952–979 (RATT…MLHP), 1091–1119 (RDKA…MAAK), and 1114–1143 (QQMA…LLGP). Residues 1145–1166 (DPWSSSQHMHWASSQHTHWPGI) are disordered. Over residues 1147–1166 (WSSSQHMHWASSQHTHWPGI) the composition is skewed to polar residues.

As to quaternary structure, interacts with calmodulin.

Functionally, essential for spermiogenesis and fertilization. May be required for manchette assembly in elongating spermatids. This is IQ domain-containing protein N (IQCN) from Macaca fascicularis (Crab-eating macaque).